A 115-amino-acid chain; its full sequence is Large ribosomal subunit protein bL20 (115 aa).

The protein belongs to the bacterial ribosomal protein bL20 family.

Functionally, binds directly to 23S ribosomal RNA and is necessary for the in vitro assembly process of the 50S ribosomal subunit. It is not involved in the protein synthesizing functions of that subunit. In Bdellovibrio bacteriovorus (strain ATCC 15356 / DSM 50701 / NCIMB 9529 / HD100), this protein is Large ribosomal subunit protein bL20.